The chain runs to 82 residues: MAAGSTGERPFFEIITSIRYWIIHAVTLPAIFIAGFLFVYTGLAYDAFGTPRPDSYFQASESKAPVVTQRYDAKSQLDLRTK.

Residues 22–36 (IIHAVTLPAIFIAGF) traverse the membrane as a helical segment. Histidine 24 provides a ligand contact to heme.

The protein belongs to the PsbE/PsbF family. As to quaternary structure, heterodimer of an alpha subunit and a beta subunit. PSII is composed of 1 copy each of membrane proteins PsbA, PsbB, PsbC, PsbD, PsbE, PsbF, PsbH, PsbI, PsbJ, PsbK, PsbL, PsbM, PsbT, PsbX, PsbY, Psb30/Ycf12, peripheral proteins PsbO, CyanoQ (PsbQ), PsbU, PsbV and a large number of cofactors. It forms dimeric complexes. Heme b serves as cofactor.

It is found in the cellular thylakoid membrane. Its function is as follows. This b-type cytochrome is tightly associated with the reaction center of photosystem II (PSII). PSII is a light-driven water:plastoquinone oxidoreductase that uses light energy to abstract electrons from H(2)O, generating O(2) and a proton gradient subsequently used for ATP formation. It consists of a core antenna complex that captures photons, and an electron transfer chain that converts photonic excitation into a charge separation. This Prochlorococcus marinus (strain MIT 9515) protein is Cytochrome b559 subunit alpha.